The chain runs to 341 residues: GDT1-like protein 1, chloroplastic (341 aa).

Residues 1–13 (MASVASSTVFASS) show a composition bias toward low complexity. 2 disordered regions span residues 1-41 (MASV…GRSV) and 54-76 (VVTRASDEEGPPEPAGQGRGGGR). A chloroplast-targeting transit peptide spans 1 to 57 (MASVASSTVFASSLPHHRATTRAPPTPPRIPRRARLPGRSVVSCLPKRGSEKLVVTR). 7 consecutive transmembrane segments (helical) span residues 79–99 (PSLDASSCGLALAAAAGVLML), 117–137 (VVGDLGDISTGFASAFLLIFF), 158–178 (AIIFLGTFGALAVMTIISVVL), 203–223 (FLAACLLVYYGVTTLLDAASG), 246–266 (GAGIISAASTIASTFVLVFIA), 286–306 (LGVIAGSLAGHAVATLIAVLG), and 318–338 (IVAYIGGSLFLAFAAVTLVEI).

This sequence belongs to the GDT1 family.

The protein localises to the plastid. It localises to the chloroplast membrane. In Oryza sativa subsp. indica (Rice), this protein is GDT1-like protein 1, chloroplastic.